A 367-amino-acid polypeptide reads, in one-letter code: Peptide chain release factor 1 (367 aa).

Gln-238 bears the N5-methylglutamine mark.

It belongs to the prokaryotic/mitochondrial release factor family. Post-translationally, methylated by PrmC. Methylation increases the termination efficiency of RF1.

Its subcellular location is the cytoplasm. Its function is as follows. Peptide chain release factor 1 directs the termination of translation in response to the peptide chain termination codons UAG and UAA. The chain is Peptide chain release factor 1 from Dictyoglomus turgidum (strain DSM 6724 / Z-1310).